The sequence spans 180 residues: Endoribonuclease YbeY (180 aa).

Histidine 136, histidine 140, and histidine 146 together coordinate Zn(2+).

This sequence belongs to the endoribonuclease YbeY family. It depends on Zn(2+) as a cofactor.

It is found in the cytoplasm. Single strand-specific metallo-endoribonuclease involved in late-stage 70S ribosome quality control and in maturation of the 3' terminus of the 16S rRNA. This Synechococcus sp. (strain CC9902) protein is Endoribonuclease YbeY.